Consider the following 389-residue polypeptide: Chorismate synthase (389 aa).

NADP(+) contacts are provided by Arg-40 and Arg-46. Residues 131-133 (RSS), 252-253 (NA), Gly-297, 312-316 (KPIPT), and Arg-338 contribute to the FMN site.

It belongs to the chorismate synthase family. Homotetramer. FMNH2 serves as cofactor.

The enzyme catalyses 5-O-(1-carboxyvinyl)-3-phosphoshikimate = chorismate + phosphate. It functions in the pathway metabolic intermediate biosynthesis; chorismate biosynthesis; chorismate from D-erythrose 4-phosphate and phosphoenolpyruvate: step 7/7. Functionally, catalyzes the anti-1,4-elimination of the C-3 phosphate and the C-6 proR hydrogen from 5-enolpyruvylshikimate-3-phosphate (EPSP) to yield chorismate, which is the branch point compound that serves as the starting substrate for the three terminal pathways of aromatic amino acid biosynthesis. This reaction introduces a second double bond into the aromatic ring system. This is Chorismate synthase from Lactiplantibacillus plantarum (strain ATCC BAA-793 / NCIMB 8826 / WCFS1) (Lactobacillus plantarum).